The sequence spans 1054 residues: DIS3-like exonuclease 1 (1054 aa).

The CSD1 domain maps to 236–313; it reads AGIKSGRYIQ…WKGRTAALCE (78 aa). Residues 313–332 are disordered; that stretch reads ENDSEDKASGESPSEPMPTG. A CSD2 domain is found at 365–431; sequence ILVTPWDYRI…GEIATILVEN (67 aa). The RNB domain occupies 465 to 816; that stretch reads RRDLRSTHLV…VHRLLMAAIS (352 aa). Ser-989 is modified (phosphoserine).

It belongs to the RNR ribonuclease family. In terms of assembly, component of the RNA exosome complex. The catalytically inactive RNA exosome core (Exo-9) complex is believed to associate with catalytic subunits EXOSC10, and DIS3 or DIS3L in cytoplasmic- and nuclear-specific RNA exosome complex forms. Mg(2+) is required as a cofactor.

The protein localises to the cytoplasm. The enzyme catalyses Exonucleolytic cleavage in the 3'- to 5'-direction to yield nucleoside 5'-phosphates.. Functionally, catalytic component of the RNA exosome complex which has 3'-&gt;5' exoribonuclease activity and participates in a multitude of cellular RNA processing and degradation events. In the cytoplasm, the RNA exosome complex is involved in general mRNA turnover and specifically degrades inherently unstable mRNAs containing AU-rich elements (AREs) within their 3' untranslated regions, and in RNA surveillance pathways, preventing translation of aberrant mRNAs. It seems to be involved in degradation of histone mRNA. The polypeptide is DIS3-like exonuclease 1 (Dis3l) (Rattus norvegicus (Rat)).